A 488-amino-acid polypeptide reads, in one-letter code: E3 ubiquitin-protein ligase TRIM39 (488 aa).

The RING-type zinc-finger motif lies at 29–70 (CSVCLEYLKEPVIIECGHNFCKACITRWWEDLERDFPCPVCR). A B box-type zinc finger spans residues 102–143 (RDESLCSQHHEPLSLFCYEDQEAVCLICAISHTHRPHTVVPM). Zn(2+)-binding residues include Cys107, His110, Cys129, and His135. Positions 181–250 (ELKRLVESRR…AHLAAEVEGK (70 aa)) form a coiled coil. Interaction with CDKN1A regions lie at residues 268–307 (KCEK…QLIA) and 359–488 (TSGR…TDWE). The region spanning 289 to 484 (SNFPRQYFAL…NAAPLTIRPP (196 aa)) is the B30.2/SPRY domain.

The protein belongs to the TRIM/RBCC family. As to quaternary structure, interacts with MOAP1. Interacts with CDKN1A. In terms of processing, autoubiquitinated.

The protein localises to the cytoplasm. Its subcellular location is the cytosol. It localises to the mitochondrion. The protein resides in the nucleus. The catalysed reaction is S-ubiquitinyl-[E2 ubiquitin-conjugating enzyme]-L-cysteine + [acceptor protein]-L-lysine = [E2 ubiquitin-conjugating enzyme]-L-cysteine + N(6)-ubiquitinyl-[acceptor protein]-L-lysine.. The protein operates within protein modification; protein ubiquitination. In terms of biological role, E3 ubiquitin-protein ligase. May facilitate apoptosis by inhibiting APC/C-Cdh1-mediated poly-ubiquitination and subsequent proteasome-mediated degradation of the pro-apoptotic protein MOAP1. Regulates the G1/S transition of the cell cycle and DNA damage-induced G2 arrest by stabilizing CDKN1A/p21. Positively regulates CDKN1A/p21 stability by competing with DTL for CDKN1A/p21 binding, therefore disrupting DCX(DTL) E3 ubiquitin ligase complex-mediated CDKN1A/p21 ubiquitination and degradation. This chain is E3 ubiquitin-protein ligase TRIM39 (Trim39), found in Mus musculus (Mouse).